The chain runs to 590 residues: Cyclin-dependent kinase-like 3 (590 aa).

Residues Tyr4 to Phe286 form the Protein kinase domain. ATP is bound by residues Val10 to Val18 and Lys33. A [NKR]KIAxRE motif is present at residues Lys45–Ile51. The active-site Proton acceptor is Asp125. At Thr158 the chain carries Phosphothreonine. Tyr160 bears the Phosphotyrosine mark. 2 disordered regions span residues Arg459–Asn508 and Leu547–Glu590. Residues Ser466–Ser477 show a composition bias toward polar residues. Composition is skewed to basic and acidic residues over residues Leu547–Ser556 and Thr580–Glu590.

This sequence belongs to the protein kinase superfamily. CMGC Ser/Thr protein kinase family. CDC2/CDKX subfamily.

It localises to the cytoplasm. The catalysed reaction is L-seryl-[protein] + ATP = O-phospho-L-seryl-[protein] + ADP + H(+). It catalyses the reaction L-threonyl-[protein] + ATP = O-phospho-L-threonyl-[protein] + ADP + H(+). This is Cyclin-dependent kinase-like 3 from Macaca fascicularis (Crab-eating macaque).